Consider the following 134-residue polypeptide: MEEDTNISNKVIRYNTVNNIWETLPNFWTGTINPGVVSHKDDIYVVCDIKDEKNVKTCIFRYNTNTYNGWELVTTTESRLSALHTILYNNTIMMLHCYESYMLQDTFNVYTREWNHMCHQHSNSYIMYNILPIY.

It belongs to the orthopoxviruses B21 protein family.

This is an uncharacterized protein from Bos taurus (Bovine).